A 356-amino-acid chain; its full sequence is Glutenin, low molecular weight subunit (356 aa).

Residues 1–19 form the signal peptide; the sequence is MKTFLVFALLALAAASAVA. A disordered region spans residues 20-179; that stretch reads QISQQQQAPP…LQQQRPPFSR (160 aa).

It belongs to the gliadin/glutenin family. Disulfide-bridge linked aggregates.

Its function is as follows. Glutenins are high-molecular weight seed storage proteins of wheat endosperm. Thought to be responsible for the visco-elastic property of wheat dough. This is Glutenin, low molecular weight subunit from Triticum aestivum (Wheat).